Consider the following 158-residue polypeptide: UPF0262 protein Rsph17025_0594 (158 aa).

This sequence belongs to the UPF0262 family.

The chain is UPF0262 protein Rsph17025_0594 from Cereibacter sphaeroides (strain ATCC 17025 / ATH 2.4.3) (Rhodobacter sphaeroides).